A 347-amino-acid polypeptide reads, in one-letter code: MNAPRCLRRLLERQWRQGGWLSTLLRPLAALTGLVVARKRNAYLTGARAAWRAPVPVVVVGNIYVGGTGKTPVVIEVVRQLQARGWTPGVVSRGYGVDVGAAPRVGQGQLAAADYGDEPALIARATGAAIAVHPHRPRAVQALLRAHPGVDVVVSDDGLQHLALARDVEIVVQDERGVGNGRLLPAGPLREPAQRLADVDAIVTNAGRPRAAAAPAAGAPRQLAMWLEPTHAQRVTDGATRTLADLAALPPARLAAAAGIGNPARFFQTLEQAGIRPAHTLALPDHYAYAQSPFTALDADLILVTAKDAIKCAALDDPRLWAVQVGTRLSDPDFGDWLSATLRARQP.

Residue 64–71 (YVGGTGKT) participates in ATP binding.

This sequence belongs to the LpxK family.

It carries out the reaction a lipid A disaccharide + ATP = a lipid IVA + ADP + H(+). Its pathway is glycolipid biosynthesis; lipid IV(A) biosynthesis; lipid IV(A) from (3R)-3-hydroxytetradecanoyl-[acyl-carrier-protein] and UDP-N-acetyl-alpha-D-glucosamine: step 6/6. Functionally, transfers the gamma-phosphate of ATP to the 4'-position of a tetraacyldisaccharide 1-phosphate intermediate (termed DS-1-P) to form tetraacyldisaccharide 1,4'-bis-phosphate (lipid IVA). This Bordetella bronchiseptica (strain ATCC BAA-588 / NCTC 13252 / RB50) (Alcaligenes bronchisepticus) protein is Tetraacyldisaccharide 4'-kinase.